Here is a 511-residue protein sequence, read N- to C-terminus: Lysine--tRNA ligase (511 aa).

Residues Glu421 and Glu428 each contribute to the Mg(2+) site.

The protein belongs to the class-II aminoacyl-tRNA synthetase family. As to quaternary structure, homodimer. Mg(2+) serves as cofactor.

The protein resides in the cytoplasm. The catalysed reaction is tRNA(Lys) + L-lysine + ATP = L-lysyl-tRNA(Lys) + AMP + diphosphate. In Janthinobacterium sp. (strain Marseille) (Minibacterium massiliensis), this protein is Lysine--tRNA ligase.